The chain runs to 113 residues: Putative insulin-like growth factor 2-associated protein (113 aa).

In terms of tissue distribution, expressed in fetal and adult liver.

The protein is Putative insulin-like growth factor 2-associated protein of Homo sapiens (Human).